A 432-amino-acid chain; its full sequence is CBL-interacting serine/threonine-protein kinase 17 (432 aa).

In terms of domain architecture, Protein kinase spans 11–266 (YELGRTLGEG…IAGIKAHDWF (256 aa)). ATP-binding positions include 17–25 (LGEGNSAKV) and K40. D134 functions as the Proton acceptor in the catalytic mechanism. An activation loop region spans residues 152 to 181 (DFGLSALSQHYREDGLLHTTCGSPNYVAPE). S156 carries the phosphoserine modification. Residue T170 is modified to Phosphothreonine. An NAF domain is found at 301–325 (DSPTIINAFQLIGMSSFLDLSGFFE). The tract at residues 331–360 (ERQIRFTSNSLAKDLLENIETIFTEMGFCL) is PPI.

It belongs to the protein kinase superfamily. CAMK Ser/Thr protein kinase family. SNF1 subfamily. Interacts with CBL1. Requires Mn(2+) as cofactor.

The enzyme catalyses L-seryl-[protein] + ATP = O-phospho-L-seryl-[protein] + ADP + H(+). It carries out the reaction L-threonyl-[protein] + ATP = O-phospho-L-threonyl-[protein] + ADP + H(+). Functionally, CIPK serine-threonine protein kinases interact with CBL proteins. Binding of a CBL protein to the regulatory NAF domain of CIPK protein lead to the activation of the kinase in a calcium-dependent manner. In Arabidopsis thaliana (Mouse-ear cress), this protein is CBL-interacting serine/threonine-protein kinase 17 (CIPK17).